Reading from the N-terminus, the 220-residue chain is Response regulator protein TmoT (220 aa).

One can recognise a Response regulatory domain in the interval 21–135; it reads VIYIVDDDNA…DLLGAIRTAL (115 aa). At aspartate 70 the chain carries 4-aspartylphosphate. Residues 151 to 216 enclose the HTH luxR-type domain; that stretch reads LKASYESLSK…DLVRVTERLK (66 aa). Positions 175–194 form a DNA-binding region, H-T-H motif; sequence NKQTALELDISEATVKVHRH.

In terms of processing, phosphorylated by TmoS.

The protein localises to the cytoplasm. In terms of biological role, member of the two-component regulatory system TmoS/TmoT involved in the regulation of toluene degradation. Induces expression of tmoX operon. The chain is Response regulator protein TmoT (tmoT) from Ectopseudomonas mendocina (Pseudomonas mendocina).